The following is a 146-amino-acid chain: 3-hydroxyacyl-[acyl-carrier-protein] dehydratase FabZ (146 aa).

The active site involves histidine 49.

This sequence belongs to the thioester dehydratase family. FabZ subfamily.

The protein resides in the cytoplasm. The catalysed reaction is a (3R)-hydroxyacyl-[ACP] = a (2E)-enoyl-[ACP] + H2O. In terms of biological role, involved in unsaturated fatty acids biosynthesis. Catalyzes the dehydration of short chain beta-hydroxyacyl-ACPs and long chain saturated and unsaturated beta-hydroxyacyl-ACPs. The sequence is that of 3-hydroxyacyl-[acyl-carrier-protein] dehydratase FabZ from Azotobacter vinelandii (strain DJ / ATCC BAA-1303).